The following is a 259-amino-acid chain: Thiazole synthase (259 aa).

Lysine 95 acts as the Schiff-base intermediate with DXP in catalysis. 1-deoxy-D-xylulose 5-phosphate contacts are provided by residues glycine 156, 182 to 183 (AG), and 204 to 205 (NT).

This sequence belongs to the ThiG family. Homotetramer. Forms heterodimers with either ThiH or ThiS.

It localises to the cytoplasm. The catalysed reaction is [ThiS sulfur-carrier protein]-C-terminal-Gly-aminoethanethioate + 2-iminoacetate + 1-deoxy-D-xylulose 5-phosphate = [ThiS sulfur-carrier protein]-C-terminal Gly-Gly + 2-[(2R,5Z)-2-carboxy-4-methylthiazol-5(2H)-ylidene]ethyl phosphate + 2 H2O + H(+). The protein operates within cofactor biosynthesis; thiamine diphosphate biosynthesis. Functionally, catalyzes the rearrangement of 1-deoxy-D-xylulose 5-phosphate (DXP) to produce the thiazole phosphate moiety of thiamine. Sulfur is provided by the thiocarboxylate moiety of the carrier protein ThiS. In vitro, sulfur can be provided by H(2)S. The chain is Thiazole synthase from Serratia proteamaculans (strain 568).